The sequence spans 400 residues: Subtilisin-like protease 11 (400 aa).

The N-terminal stretch at 1-19 (MGLFTVVFTAIAALSAVDA) is a signal peptide. The propeptide occupies 20–117 (AELLRSPNSK…VEHDRYVYID (98 aa)). One can recognise an Inhibitor I9 domain in the interval 35–116 (SYLVVMKDSV…FVEHDRYVYI (82 aa)). The 274-residue stretch at 127-400 (SWGLGRVSHR…NKLLYNGSGQ (274 aa)) folds into the Peptidase S8 domain. N138 carries N-linked (GlcNAc...) asparagine glycosylation. Catalysis depends on charge relay system residues D159 and H191. 3 N-linked (GlcNAc...) asparagine glycosylation sites follow: N252, N336, and N337. The Charge relay system role is filled by S346. N-linked (GlcNAc...) asparagine glycosylation is found at N388 and N396.

This sequence belongs to the peptidase S8 family.

The protein resides in the secreted. Functionally, secreted subtilisin-like serine protease with keratinolytic activity that contributes to pathogenicity. This Arthroderma gypseum (strain ATCC MYA-4604 / CBS 118893) (Microsporum gypseum) protein is Subtilisin-like protease 11 (SUB11).